The primary structure comprises 210 residues: Somatotropin-1 (210 aa).

The N-terminal stretch at methionine 1 to alanine 22 is a signal peptide. Histidine 38 serves as a coordination point for Zn(2+). An intrachain disulfide couples cysteine 71 to cysteine 183. Position 192 (glutamate 192) interacts with Zn(2+). Residues cysteine 200 and cysteine 208 are joined by a disulfide bond.

It belongs to the somatotropin/prolactin family.

Its subcellular location is the secreted. Functionally, growth hormone plays an important role in growth control and is involved in the regulation of several anabolic processes. Implicated as an osmoregulatory substance important for seawater adaptation. The sequence is that of Somatotropin-1 (gh1) from Oncorhynchus nerka (Sockeye salmon).